A 92-amino-acid polypeptide reads, in one-letter code: UPF0728 protein C10orf53 homolog (92 aa).

This sequence belongs to the UPF0728 family.

The sequence is that of UPF0728 protein C10orf53 homolog from Danio rerio (Zebrafish).